A 251-amino-acid chain; its full sequence is Protein DEEPER ROOTING 1 (251 aa).

Residues 46–52 (SLLAIGT) carry the IGT motif motif. Residues 64–105 (VENSSDNVQSVQDTVKFTEEEVDKIRKEFETLLAIKDQAEAQ) adopt a coiled-coil conformation.

The protein belongs to the LAZY family.

Its function is as follows. Involved in the control of root growth angle. Involved in cell elongation in the root tip that causes asymmetric root growth and downward bending of the root in response to gravity. The polypeptide is Protein DEEPER ROOTING 1 (Oryza sativa subsp. japonica (Rice)).